The primary structure comprises 440 residues: Gamma-aminobutyric acid receptor subunit pi (440 aa).

Positions 1–23 (MSYSLYLAFLCLSLLTQRTCIQG) are cleaved as a signal peptide. Topologically, residues 24 to 241 (NQVNVEVSRS…LVLQFELRRN (218 aa)) are extracellular. N43, N102, and N145 each carry an N-linked (GlcNAc...) asparagine glycan. C160 and C174 are joined by a disulfide. N196 and N228 each carry an N-linked (GlcNAc...) asparagine glycan. Residues 242–262 (VLYFILETYVPSTFLVVLSWV) form a helical membrane-spanning segment. Residues 263–270 (SFWISLDS) are Cytoplasmic-facing. A helical transmembrane segment spans residues 271 to 290 (VPARTCIGVTTVLSMTTLMI). Residues 291–301 (GSRTSLPNTNC) are Extracellular-facing. A helical transmembrane segment spans residues 302–322 (FIKAIDVYLGICFSFVFGALL). The Cytoplasmic portion of the chain corresponds to 323 to 419 (EYAVAHYSSL…NPSNVDRYSK (97 aa)). The chain crosses the membrane as a helical span at residues 420–440 (LLFPLIFMLANVFYWAYYMYF).

The protein belongs to the ligand-gated ion channel (TC 1.A.9) family. Gamma-aminobutyric acid receptor (TC 1.A.9.5) subfamily. GABRP sub-subfamily. Heteropentamer, formed by a combination of alpha (GABRA1-6), beta (GABRB1-3), gamma (GABRG1-3), delta (GABRD), epsilon (GABRE), rho (GABRR1-3), pi (GABRP) and theta (GABRQ) chains, each subunit exhibiting distinct physiological and pharmacological properties.

Its subcellular location is the cell membrane. It is found in the apical cell membrane. It catalyses the reaction chloride(in) = chloride(out). Functionally, pi subunit of the heteropentameric ligand-gated chloride channel gated by gamma-aminobutyric acid (GABA). GABA-gated chloride channels, also named GABA(A) receptors (GABAAR), consist of five subunits arranged around a central pore and contain GABA active binding site(s) located at the alpha and beta subunit interfaces. When activated by GABA, GABAARs selectively allow the flow of chloride anions across the cell membrane down their electrochemical gradient. Pi-containing GABAARs are mostly located in peripheral tissues. In the uterus, pi subunits modulate uterus contraction by altering the sensitivity of GABAARs to pregnanolone. In the lungs, pi-containing GABAARs contribute to pulmonary fluid transport via luminal secretion of chloride. The protein is Gamma-aminobutyric acid receptor subunit pi of Mus musculus (Mouse).